Reading from the N-terminus, the 451-residue chain is Crh-like protein 2 (451 aa).

Positions 1–21 are cleaved as a signal peptide; the sequence is MQFNSLVLLAGATILSPFVQA. The region spanning 22–241 is the GH16 domain; it reads QTWTTCNPLN…FTKVPFTMYV (220 aa). Residues cysteine 27 and cysteine 34 are joined by a disulfide bond. 4 N-linked (GlcNAc...) asparagine glycosylation sites follow: asparagine 31, asparagine 43, asparagine 49, and asparagine 59. Glutamate 121 (nucleophile) is an active-site residue. Residue glutamate 125 is the Proton donor of the active site. Glutamate 125 is a binding site for chitin. 3 N-linked (GlcNAc...) asparagine glycosylation sites follow: asparagine 130, asparagine 143, and asparagine 165. Positions 206, 210, and 222 each coordinate chitin. The N-linked (GlcNAc...) asparagine glycan is linked to asparagine 273. Residues 305–325 form a helical membrane-spanning segment; sequence VYCGGGAAVAALVSAFLFTFL. N-linked (GlcNAc...) asparagine glycosylation occurs at asparagine 366.

The protein belongs to the glycosyl hydrolase 16 family. CRH1 subfamily. As to quaternary structure, forms homodimers as well as heterodimers with other crh protein members crh1 and crh3. Dimerization may be necessary for the transglycosylation activity.

The protein localises to the membrane. It carries out the reaction Random endo-hydrolysis of N-acetyl-beta-D-glucosaminide (1-&gt;4)-beta-linkages in chitin and chitodextrins.. Functionally, dual chitinase/transglycosylase that plays a role in cell wall architecture. Chitinase and transglycosylase activities are coupled. Required for the polysaccharide cross-linking at the septa and the cell wall. More specifically, transfers chitin to 1,6-beta-glucan in the cell wall. The sequence is that of Crh-like protein 2 from Botryotinia fuckeliana (strain B05.10) (Noble rot fungus).